Here is a 228-residue protein sequence, read N- to C-terminus: L-ribulose-5-phosphate 4-epimerase UlaF (228 aa).

Substrate is bound by residues 26–27 (GN), 43–44 (SG), and 72–73 (SS). Residues D74, H93, and H95 each contribute to the Zn(2+) site. Residue D118 is the Proton donor/acceptor of the active site. H167 contacts Zn(2+). Y225 acts as the Proton donor/acceptor in catalysis.

Belongs to the aldolase class II family. AraD/FucA subfamily. Zn(2+) serves as cofactor.

It carries out the reaction L-ribulose 5-phosphate = D-xylulose 5-phosphate. Its pathway is cofactor degradation; L-ascorbate degradation; D-xylulose 5-phosphate from L-ascorbate: step 4/4. Catalyzes the isomerization of L-ribulose 5-phosphate to D-xylulose 5-phosphate. Is involved in the anaerobic L-ascorbate utilization. In Escherichia coli O8 (strain IAI1), this protein is L-ribulose-5-phosphate 4-epimerase UlaF.